Here is an 847-residue protein sequence, read N- to C-terminus: Rho GTPase-activating protein 12 (847 aa).

In terms of domain architecture, SH3 spans 12-74 (PGQAYIEVEY…PAQYVKEVTR (63 aa)). The segment at 110–241 (LPELSSFGKP…PPNQGRPDSP (132 aa)) is disordered. 2 stretches are compositionally biased toward polar residues: residues 117–174 (GKPS…QNRT) and 191–200 (TSFSQEQSCD). Ser-165 carries the post-translational modification Phosphoserine. Phosphoserine is present on residues Ser-201, Ser-213, and Ser-215. The segment covering 224 to 234 (TEQIRATTPPN) has biased composition (polar residues). Phosphothreonine is present on residues Thr-230 and Thr-231. Ser-240 is modified (phosphoserine). Tyr-243 carries the phosphotyrosine modification. 2 consecutive WW domains span residues 265 to 298 (IQIN…PPRW) and 358 to 391 (DYTN…LPKY). Positions 293–317 (WKPPRWTRDASISKGDFQSPGDQEL) are disordered. 2 disordered regions span residues 428–466 (DTND…DQEK) and 591–625 (PDSP…SEQK). Residues 445 to 461 (NESSPSSPKHQDTASSP) are compositionally biased toward polar residues. The PH domain occupies 463–575 (DQEKYGLLNV…WFKVLSSTIN (113 aa)). Position 593 is a phosphoserine (Ser-593). Over residues 595 to 610 (GIEKHDKEKEQKDPKK) the composition is skewed to basic and acidic residues. The region spanning 657-845 (SNLANLCQRE…LILLELSSIF (189 aa)) is the Rho-GAP domain.

Functionally, GTPase activator for the Rho-type GTPases by converting them to an inactive GDP-bound state. In Macaca fascicularis (Crab-eating macaque), this protein is Rho GTPase-activating protein 12 (ARHGAP12).